A 302-amino-acid polypeptide reads, in one-letter code: 4-hydroxy-tetrahydrodipicolinate synthase (302 aa).

Residue Thr57 participates in pyruvate binding. Tyr145 serves as the catalytic Proton donor/acceptor. Catalysis depends on Lys173, which acts as the Schiff-base intermediate with substrate. Ile213 is a pyruvate binding site.

It belongs to the DapA family. Homotetramer; dimer of dimers.

Its subcellular location is the cytoplasm. It carries out the reaction L-aspartate 4-semialdehyde + pyruvate = (2S,4S)-4-hydroxy-2,3,4,5-tetrahydrodipicolinate + H2O + H(+). The protein operates within amino-acid biosynthesis; L-lysine biosynthesis via DAP pathway; (S)-tetrahydrodipicolinate from L-aspartate: step 3/4. Its function is as follows. Catalyzes the condensation of (S)-aspartate-beta-semialdehyde [(S)-ASA] and pyruvate to 4-hydroxy-tetrahydrodipicolinate (HTPA). The chain is 4-hydroxy-tetrahydrodipicolinate synthase from Corynebacterium aurimucosum (strain ATCC 700975 / DSM 44827 / CIP 107346 / CN-1) (Corynebacterium nigricans).